Consider the following 123-residue polypeptide: Large ribosomal subunit protein bL19 (123 aa).

Belongs to the bacterial ribosomal protein bL19 family.

In terms of biological role, this protein is located at the 30S-50S ribosomal subunit interface and may play a role in the structure and function of the aminoacyl-tRNA binding site. This Laribacter hongkongensis (strain HLHK9) protein is Large ribosomal subunit protein bL19.